The following is a 132-amino-acid chain: Fatty acid-binding protein, adipocyte (132 aa).

Position 2 is an N-acetylcysteine (cysteine 2). Serine 13 bears the Phosphoserine mark. The residue at position 20 (tyrosine 20) is a Phosphotyrosine; by Tyr-kinases. The Nuclear localization signal signature appears at 22–32 (KEVGVGFATRK). 127–129 (RVY) contributes to the a fatty acid binding site.

The protein belongs to the calycin superfamily. Fatty-acid binding protein (FABP) family. Monomer. Homodimer. Interacts with PPARG.

It is found in the cytoplasm. Its subcellular location is the nucleus. Lipid transport protein in adipocytes. Binds both long chain fatty acids and retinoic acid. Delivers long-chain fatty acids and retinoic acid to their cognate receptors in the nucleus. The protein is Fatty acid-binding protein, adipocyte (Fabp4) of Rattus norvegicus (Rat).